A 902-amino-acid chain; its full sequence is AAA+ ATPase ClpV1 (902 aa).

One can recognise a Clp R domain in the interval 10–151; sequence FGKLNSLAYK…KVEALTERFD (142 aa). 2 repeat regions span residues 13 to 78 and 88 to 151; these read LNSL…LDRL and LSSH…ERFD. ATP is bound at residue 237–244; that stretch reads GEAGVGKT. Residues 441–559 adopt a coiled-coil conformation; the sequence is AEVDDSRRRI…AQLSALQGEE (119 aa). ATP is bound at residue 640–647; it reads GTSGVGKT.

Belongs to the ClpA/ClpB family. In terms of assembly, interacts with TagJ.

The protein localises to the cytoplasm. Functionally, component of the H1 type VI (H1-T6SS) secretion system that plays a role in the release of toxins targeting both eukaryotic and prokaryotic species. Acts as an AAA(+) ATPase that disassembles the contracted sheath, which resets the systems for reassembly of an extended sheath that is ready to fire again. The sequence is that of AAA+ ATPase ClpV1 (clpV1) from Pseudomonas aeruginosa (strain ATCC 15692 / DSM 22644 / CIP 104116 / JCM 14847 / LMG 12228 / 1C / PRS 101 / PAO1).